We begin with the raw amino-acid sequence, 207 residues long: MPKVIGLTGGIASGKSTVSELLSVFGFKVVDADKAAREAVKKGSKGLAQVREVFGDEAIDENGEMNRRYMGDLVFNHPEKRLELNAIIHPIVRDIMEEEKQEYLKQGYNVIMDIPLLFENELENTVDEVWVVYTSESIQMDRLMQRNNLSLEDAKARVYSQISIDKKSRMADHVIDNLGDKLELKQNLERLLEEEGYIEKPNYGEED.

The 200-residue stretch at 4-203 (VIGLTGGIAS…EEGYIEKPNY (200 aa)) folds into the DPCK domain. Residue 12 to 17 (ASGKST) coordinates ATP.

It belongs to the CoaE family.

It localises to the cytoplasm. It carries out the reaction 3'-dephospho-CoA + ATP = ADP + CoA + H(+). Its pathway is cofactor biosynthesis; coenzyme A biosynthesis; CoA from (R)-pantothenate: step 5/5. In terms of biological role, catalyzes the phosphorylation of the 3'-hydroxyl group of dephosphocoenzyme A to form coenzyme A. The protein is Dephospho-CoA kinase of Staphylococcus aureus (strain USA300).